Reading from the N-terminus, the 126-residue chain is Probable cystatin-16 (126 aa).

The first 20 residues, 1–20 (MFLKATLLLGLAVLGMHVWA), serve as a signal peptide directing secretion. Cysteine 84 and cysteine 94 form a disulfide bridge. Asparagine 106 carries N-linked (GlcNAc...) asparagine glycosylation.

This sequence belongs to the cystatin family.

It is found in the secreted. The polypeptide is Probable cystatin-16 (Bos taurus (Bovine)).